The sequence spans 467 residues: Ammonium transporter Rh type C (467 aa).

At 1–3 the chain is on the cytoplasmic side; the sequence is MRL. A helical transmembrane segment spans residues 4 to 24; the sequence is RLPVVCFLWEIAMIVLFGIFV. Over 25–55 the chain is Extracellular; it reads RYNDEADPHWSEFMKAQNITSDIQNDYYFRY. Residue Asn-42 is glycosylated (N-linked (GlcNAc...) asparagine). Residues 56–76 form a helical membrane-spanning segment; the sequence is PSFQDVHVMIFVGFGFLMTFL. Residues 77-80 are Cytoplasmic-facing; that stretch reads KRYG. Residues 81–101 traverse the membrane as a helical segment; sequence FGSVAFNFLLAAFGIQWAILM. At 102-119 the chain is on the extracellular side; sequence QGWFHTFKNGKILIGVES. Residues 120-139 traverse the membrane as a helical segment; it reads LINADFCVGSVCIAFGAILG. The Cytoplasmic portion of the chain corresponds to 140–145; it reads KVSPVQ. The chain crosses the membrane as a helical span at residues 146 to 168; sequence IMVMTLFQVTLFAVNEWILLNLL. The Extracellular portion of the chain corresponds to 169–173; it reads HVNDA. A helical membrane pass occupies residues 174–194; the sequence is GGSMTIHTFGAYFGLTVAWIL. The Cytoplasmic segment spans residues 195 to 213; sequence NRPRLKQTNDKEGSVYVSD. The helical transmembrane segment at 214-234 threads the bilayer; sequence LFSMIGTLFLWMFWPSFNSAV. Over 235–245 the chain is Extracellular; that stretch reads SYHGDAQHRAA. The chain crosses the membrane as a helical span at residues 246 to 266; it reads INTYCSLAACVLTTVAISSVV. At 267-271 the chain is on the cytoplasmic side; it reads NKKGK. Residues 272–292 traverse the membrane as a helical segment; the sequence is LEMVHIQNATLAGGVAVGTAA. Residues 293-295 are Extracellular-facing; that stretch reads EMM. Residues 296 to 316 form a helical membrane-spanning segment; the sequence is LTPYGSLIVGFICGIVSTLGF. At 317 to 337 the chain is on the cytoplasmic side; it reads TYCSPFLSNKLRLHDTCGIHN. A helical transmembrane segment spans residues 338–358; the sequence is LHAMPGLIGGIVGAVTAACAT. Topologically, residues 359–390 are extracellular; sequence EAVYTADGLKKMFRFEGDYATRTPSMQGGYQA. A helical transmembrane segment spans residues 391 to 411; that stretch reads AGLCVSLAFGLVGGTVVGCIL. The Cytoplasmic segment spans residues 412 to 467; it reads KLPIWGDPSDENCFDDEVYWELPEEDEEEHLGAANQYVTHLPENFKLPDRTEVAFK.

This sequence belongs to the ammonium transporter (TC 2.A.49) family. Rh subfamily. In terms of assembly, homotrimer.

Its subcellular location is the apical cell membrane. Functionally, functions as an ammonia transporter. This chain is Ammonium transporter Rh type C (rhcg), found in Xenopus tropicalis (Western clawed frog).